The primary structure comprises 641 residues: Probable potassium transport system protein Kup (641 aa).

The segment covering 1 to 14 has biased composition (polar residues); that stretch reads MALDSESSASNRQG. The segment at 1–20 is disordered; sequence MALDSESSASNRQGSRNEQD. Helical transmembrane passes span 29 to 49, 69 to 89, 120 to 140, 156 to 176, 188 to 208, 236 to 256, 267 to 287, 307 to 327, 355 to 375, 384 to 404, 410 to 430, and 437 to 457; these read LCLT…LYAF, ILSL…LLII, VLIV…MITP, PQLT…LFMV, FGPI…NGII, VLGG…DMGH, FALV…LLLL, LVGL…SGVF, VYVP…VLHF, AFGI…FFVM, WNIL…LAFF, and ITDG…LMIT.

It belongs to the HAK/KUP transporter (TC 2.A.72) family.

It is found in the cell inner membrane. It carries out the reaction K(+)(in) + H(+)(in) = K(+)(out) + H(+)(out). In terms of biological role, transport of potassium into the cell. Likely operates as a K(+):H(+) symporter. This Nitrosomonas eutropha (strain DSM 101675 / C91 / Nm57) protein is Probable potassium transport system protein Kup.